The sequence spans 305 residues: Glycine--tRNA ligase alpha subunit (305 aa).

Belongs to the class-II aminoacyl-tRNA synthetase family. As to quaternary structure, tetramer of two alpha and two beta subunits.

Its subcellular location is the cytoplasm. It carries out the reaction tRNA(Gly) + glycine + ATP = glycyl-tRNA(Gly) + AMP + diphosphate. The sequence is that of Glycine--tRNA ligase alpha subunit from Vibrio vulnificus (strain CMCP6).